The chain runs to 383 residues: Putative F-box/kelch-repeat protein At1g62270 (383 aa).

Positions 6–51 (TSSFSSLPWDLVEDILARVPATSLKRLRSTCKQWNFLFNDQIFTKM) constitute an F-box domain. 3 Kelch repeats span residues 110 to 158 (KVFH…YGNY), 160 to 211 (SCYN…LRGN), and 349 to 383 (TVYIIGENEYWRKEDIVQRSYRPRMFSYVPSLVQI).

This Arabidopsis thaliana (Mouse-ear cress) protein is Putative F-box/kelch-repeat protein At1g62270.